The chain runs to 264 residues: Short chain dehydrogenase CPUR_05429 (264 aa).

Positions 24, 70, 97, and 130 each coordinate NADP(+). Residues Ser146 and Ser147 each act as proton donor in the active site. NADP(+) contacts are provided by Tyr161, Lys165, and Thr196. The active-site Proton acceptor is the Tyr161. Lys165 serves as the catalytic Lowers pKa of active site Tyr.

Belongs to the short-chain dehydrogenases/reductases (SDR) family.

It functions in the pathway pigment biosynthesis. Short chain dehydrogenase; part of the ergochrome gene cluster responsible for the typical purple-black color of the ergot sclerotia. The ergochrome gene cluster produces several ergot pigments including the yellow ergochrome secalonic acid and its derivatives, as well as the red anthraquinones endocrocin and clavorubin. The pathway begins with the synthesis of atrochrysone thioester by the polyketide synthase (PKS) CPUR_05437. The atrochrysone carboxyl ACP thioesterase CPUR_05436 then breaks the thioester bond and releases the atrochrysone carboxylic acid from CPUR_05437. The atrochrysone carboxylic acid is then converted to atrochrysone which is further transformed into emodin anthrone. The next step is performed by the anthrone oxygenase CPUR_05434 that catalyzes the oxidation of emodinanthrone to emodin. Emodin is further modified to yield monodictyphenone via several steps involving CPUR_05427, CPUR_05428, CPUR_05429 and CPUR_05430. The short chain dehydrogenase/reductase CPUR_05418 then catalyzes the C-5 ketoreduction to give the xanthone skeleton of the monomeric units. Ergochromes formation requires further dimerization steps of different xanthone units, probably catalyzed by the cytochrome P450 monooxygenase CPUR_05419. CPUR_05425, CPUR_05426 and CPUR_05431 are unique to Claviceps, thus it is likely that they are involved in further modification of xanthone units or in their dimerization. The yellow ergochromes and the red anthraquinone pigments endocrocin and clavorubin are products from the same PKS derived precursors and the latter are likely shunt products in the pathway of xanthone biosynthesis. It is proposed that atrochrysone carboxylic acid released from the PKS CPUR_05437 can also be converted to endocrocin anthrone which is further oxidized into endocrocin by CPUR_05435. Endocrocin could be then modified to clavorubin, possibly by CPUR_05423 and CPUR_05431. Clavorubin is the principal anthraquinone metabolite produced by the cluster with a much higher yield compared to endocrocin. This is Short chain dehydrogenase CPUR_05429 from Claviceps purpurea (strain 20.1) (Ergot fungus).